The sequence spans 676 residues: ATP-dependent zinc metalloprotease FTSH 2, chloroplastic (676 aa).

A chloroplast-targeting transit peptide spans 1-32 (MAPTSMSLAAKTPLPFSTLPSSGVAQRPVSVT). A helical transmembrane segment spans residues 155 to 175 (LLFNLIGNLAFPLILIGGLFL). 254–261 (GPPGTGKT) lines the ATP pocket. Position 475 (His475) interacts with Zn(2+). Glu476 is a catalytic residue. Zn(2+)-binding residues include His479 and Asp553.

It in the N-terminal section; belongs to the AAA ATPase family. This sequence in the C-terminal section; belongs to the peptidase M41 family. Zn(2+) serves as cofactor.

The protein resides in the plastid. The protein localises to the chloroplast thylakoid membrane. Probable ATP-dependent zinc metallopeptidase. This is ATP-dependent zinc metalloprotease FTSH 2, chloroplastic (FTSH2) from Oryza sativa subsp. japonica (Rice).